The primary structure comprises 235 residues: LexA repressor (235 aa).

A DNA-binding region (H-T-H motif) is located at residues 26 to 46; the sequence is FDEMKDALDLKSKSGIHRLIT. Active-site for autocatalytic cleavage activity residues include serine 156 and lysine 194.

It belongs to the peptidase S24 family. As to quaternary structure, homodimer.

It catalyses the reaction Hydrolysis of Ala-|-Gly bond in repressor LexA.. Its function is as follows. Represses a number of genes involved in the response to DNA damage (SOS response), including recA and lexA. In the presence of single-stranded DNA, RecA interacts with LexA causing an autocatalytic cleavage which disrupts the DNA-binding part of LexA, leading to derepression of the SOS regulon and eventually DNA repair. The chain is LexA repressor from Paramagnetospirillum magneticum (strain ATCC 700264 / AMB-1) (Magnetospirillum magneticum).